Here is a 249-residue protein sequence, read N- to C-terminus: uncharacterized protein (249 aa).

This sequence belongs to the HAD-like hydrolase superfamily. CbbY/CbbZ/Gph/YieH family.

This is an uncharacterized protein from Schizosaccharomyces pombe (strain 972 / ATCC 24843) (Fission yeast).